Here is a 144-residue protein sequence, read N- to C-terminus: Hemoglobin embryonic subunit alpha (144 aa).

The 142-residue stretch at 3–144 (SLSAKDKDVV…LALALAEKYR (142 aa)) folds into the Globin domain. His61 provides a ligand contact to O2. His90 is a heme b binding site.

It belongs to the globin family. Heterotetramer of two alpha chains and two beta chains. Red blood cells.

Involved in oxygen transport from gills to the various peripheral tissues. The sequence is that of Hemoglobin embryonic subunit alpha from Oryzias latipes (Japanese rice fish).